The sequence spans 261 residues: Rhomboid-type serine protease 2 (261 aa).

The next 5 membrane-spanning stretches (helical) occupy residues 17 to 37 (LTAGLSVFLTLVYVLNWVFPI), 58 to 78 (LYPLAHLSIFHLLLNLMSLFV), 94 to 114 (ITLNLLAIVTGVVYCLVGMLL), 116 to 136 (PNVYVGGASGWCFTLCGYFAV), and 155 to 175 (LYIPLVFLVLVTLLMPGSSFV). Ser124 serves as the catalytic Nucleophile. The active site involves His177.

It belongs to the peptidase S54 family.

Its subcellular location is the golgi apparatus membrane. It is found in the golgi apparatus. The protein localises to the cis-Golgi network membrane. It catalyses the reaction Cleaves type-1 transmembrane domains using a catalytic dyad composed of serine and histidine that are contributed by different transmembrane domains.. Its function is as follows. Probable rhomboid-type serine protease that catalyzes intramembrane proteolysis. In Eremothecium gossypii (strain ATCC 10895 / CBS 109.51 / FGSC 9923 / NRRL Y-1056) (Yeast), this protein is Rhomboid-type serine protease 2 (RBD2).